The sequence spans 38 residues: Large ribosomal subunit protein bL36 (38 aa).

Belongs to the bacterial ribosomal protein bL36 family.

This Ralstonia nicotianae (strain ATCC BAA-1114 / GMI1000) (Ralstonia solanacearum) protein is Large ribosomal subunit protein bL36.